Consider the following 333-residue polypeptide: Phosphoribosylformylglycinamidine cyclo-ligase (333 aa).

This sequence belongs to the AIR synthase family.

It is found in the cytoplasm. It catalyses the reaction 2-formamido-N(1)-(5-O-phospho-beta-D-ribosyl)acetamidine + ATP = 5-amino-1-(5-phospho-beta-D-ribosyl)imidazole + ADP + phosphate + H(+). It functions in the pathway purine metabolism; IMP biosynthesis via de novo pathway; 5-amino-1-(5-phospho-D-ribosyl)imidazole from N(2)-formyl-N(1)-(5-phospho-D-ribosyl)glycinamide: step 2/2. The sequence is that of Phosphoribosylformylglycinamidine cyclo-ligase from Methanococcoides burtonii (strain DSM 6242 / NBRC 107633 / OCM 468 / ACE-M).